Here is a 236-residue protein sequence, read N- to C-terminus: Small ribosomal subunit protein uS2c (236 aa).

It belongs to the universal ribosomal protein uS2 family.

It localises to the plastid. It is found in the chloroplast. This is Small ribosomal subunit protein uS2c (rps2) from Agrostis stolonifera (Creeping bentgrass).